The primary structure comprises 529 residues: Na(+)/H(+) antiporter NhaB (529 aa).

Helical transmembrane passes span 13–33 (FLGKAPDWYKVAIISFLIINP), 34–54 (IVFFFVDPFVAGWLLVVEFIF), 90–110 (LVANIEVLLLLVFMVAGIYFM), 113–133 (LLLFIFTKILLGIRSKAILSL), 136–156 (CFAAAFLSAFLDALTVIAVVI), 205–225 (LLMHAGVGTALGGVTTMVGEP), 241–261 (FLIRMAPVTLPVFVCGLLTCF), 306–326 (GLIAVWLIVGLALHLAAVGLI), 327–347 (GLSVIILATAFTGVIEEHSLG), 351–371 (EEALPFTALLAVFFSIVAVII), 451–471 (ATPNGQAAFLFLLTSALAPLI), and 479–499 (VIMALPYTIVLALVGLFGIVF).

This sequence belongs to the NhaB Na(+)/H(+) (TC 2.A.34) antiporter family.

The protein localises to the cell inner membrane. The catalysed reaction is 2 Na(+)(in) + 3 H(+)(out) = 2 Na(+)(out) + 3 H(+)(in). In terms of biological role, na(+)/H(+) antiporter that extrudes sodium in exchange for external protons. This chain is Na(+)/H(+) antiporter NhaB, found in Vibrio vulnificus (strain CMCP6).